Consider the following 765-residue polypeptide: Probable serine/threonine-protein kinase DDB_G0271402 (765 aa).

One can recognise a Protein kinase domain in the interval 35–328; it reads LEFGQEIGKG…KEITERLKSL (294 aa). ATP-binding positions include 41-49 and K62; that span reads IGKGAYGKI. D192 (proton acceptor) is an active-site residue. Disordered stretches follow at residues 371–393, 443–477, 491–527, 545–620, 654–684, 699–738, and 746–765; these read IVHN…NNSN, SMGD…KIIN, SSDL…NNNS, PIQI…QQYQ, PLNI…HHHL, IISS…PTNI, and ASNS…TVQS. Positions 446-458 are enriched in acidic residues; sequence DESDLDSDDEDDS. Low complexity-rich tracts occupy residues 459-470, 499-527, 562-605, 662-678, and 699-720; these read YTSSASSSRCNS, NGNN…NNNS, PPTS…PKSN, NNNN…GNVN, and IISS…SLTS.

It belongs to the protein kinase superfamily. TKL Ser/Thr protein kinase family.

The enzyme catalyses L-seryl-[protein] + ATP = O-phospho-L-seryl-[protein] + ADP + H(+). The catalysed reaction is L-threonyl-[protein] + ATP = O-phospho-L-threonyl-[protein] + ADP + H(+). The protein is Probable serine/threonine-protein kinase DDB_G0271402 of Dictyostelium discoideum (Social amoeba).